Here is a 371-residue protein sequence, read N- to C-terminus: Aminomethyltransferase (371 aa).

This sequence belongs to the GcvT family. As to quaternary structure, the glycine cleavage system is composed of four proteins: P, T, L and H.

It catalyses the reaction N(6)-[(R)-S(8)-aminomethyldihydrolipoyl]-L-lysyl-[protein] + (6S)-5,6,7,8-tetrahydrofolate = N(6)-[(R)-dihydrolipoyl]-L-lysyl-[protein] + (6R)-5,10-methylene-5,6,7,8-tetrahydrofolate + NH4(+). The glycine cleavage system catalyzes the degradation of glycine. The polypeptide is Aminomethyltransferase (Cellvibrio japonicus (strain Ueda107) (Pseudomonas fluorescens subsp. cellulosa)).